The primary structure comprises 206 residues: Protease (206 aa).

Catalysis depends on residues H54, D71, and C122.

It belongs to the peptidase C5 family. As to quaternary structure, interacts with protease cofactor pVI-C; this interaction is necessary for protease activation.

The protein resides in the virion. The protein localises to the host nucleus. It catalyses the reaction Cleaves proteins of the adenovirus and its host cell at two consensus sites: -Yaa-Xaa-Gly-Gly-|-Xaa- and -Yaa-Xaa-Gly-Xaa-|-Gly- (in which Yaa is Met, Ile or Leu, and Xaa is any amino acid).. Requires DNA and protease cofactor for maximal activation. Inside nascent virions, becomes partially activated by binding to the viral DNA, allowing it to cleave the cofactor that binds to the protease and fully activates it. Actin, like the viral protease cofactor, seems to act as a cofactor in the cleavage of cytokeratin 18 and of actin itself. In terms of biological role, cleaves viral precursor proteins (pTP, pIIIa, pVI, pVII, pVIII, and pX) inside newly assembled particles giving rise to mature virions. Protease complexed to its cofactor slides along the viral DNA to specifically locate and cleave the viral precursors. Mature virions have a weakened organization compared to the unmature virions, thereby facilitating subsequent uncoating. Without maturation, the particle lacks infectivity and is unable to uncoat. Late in adenovirus infection, in the cytoplasm, may participate in the cytoskeleton destruction. Cleaves host cell cytoskeletal keratins K7 and K18. This Homo sapiens (Human) protein is Protease.